Here is a 57-residue protein sequence, read N- to C-terminus: MAVPKRRTSKTRKNKRRTHFKISVPGMTECPNCGEYKLSHRVCKNCGSYKGEDVVSK.

The protein belongs to the bacterial ribosomal protein bL32 family.

In Staphylococcus saprophyticus subsp. saprophyticus (strain ATCC 15305 / DSM 20229 / NCIMB 8711 / NCTC 7292 / S-41), this protein is Large ribosomal subunit protein bL32.